Consider the following 88-residue polypeptide: Small ribosomal subunit protein bS18B (88 aa).

The protein belongs to the bacterial ribosomal protein bS18 family. In terms of assembly, part of the 30S ribosomal subunit. Forms a tight heterodimer with protein bS6.

Functionally, binds as a heterodimer with protein bS6 to the central domain of the 16S rRNA, where it helps stabilize the platform of the 30S subunit. The sequence is that of Small ribosomal subunit protein bS18B from Mycolicibacterium paratuberculosis (strain ATCC BAA-968 / K-10) (Mycobacterium paratuberculosis).